Reading from the N-terminus, the 274-residue chain is HTH-type transcriptional regulator GadX (274 aa).

The HTH araC/xylS-type domain occupies 145–242 (TRVCTVINNN…GMTPTEYQER (98 aa)). 2 consecutive DNA-binding regions (H-T-H motif) follow at residues 162–183 (ARIA…REEG) and 209–232 (IKRV…RNYY).

As to quaternary structure, homodimer.

Functionally, positively regulates the expression of about fifteen genes involved in acid resistance such as gadA, gadB and gadC. Depending on the conditions (growth phase and medium), can repress gadW. Negatively regulates perA expression in acidic conditions and positively regulates it in alkaline conditions. This is HTH-type transcriptional regulator GadX (gadX) from Escherichia coli O127:H6 (strain E2348/69 / EPEC).